The chain runs to 557 residues: Urocanate hydratase (557 aa).

The interval 1-20 (MSNPRHNEREVRSPRGDELN) is disordered. Residues 52–53 (GG), Gln130, 176–178 (GMG), Glu196, Arg201, 242–243 (NA), 263–267 (QTSAH), 273–274 (YL), and Tyr322 each bind NAD(+). Cys410 is a catalytic residue. Gly492 contributes to the NAD(+) binding site.

Belongs to the urocanase family. The cofactor is NAD(+).

It is found in the cytoplasm. The enzyme catalyses 4-imidazolone-5-propanoate = trans-urocanate + H2O. Its pathway is amino-acid degradation; L-histidine degradation into L-glutamate; N-formimidoyl-L-glutamate from L-histidine: step 2/3. Functionally, catalyzes the conversion of urocanate to 4-imidazolone-5-propionate. The chain is Urocanate hydratase from Brucella canis (strain ATCC 23365 / NCTC 10854 / RM-666).